Here is a 1043-residue protein sequence, read N- to C-terminus: Isoleucine--tRNA ligase (1043 aa).

Positions 49-59 (PFATGLPHYGH) match the 'HIGH' region motif. The 'KMSKS' region motif lies at 592-596 (KMSKR). Lysine 595 lines the ATP pocket.

Belongs to the class-I aminoacyl-tRNA synthetase family. IleS type 2 subfamily. As to quaternary structure, monomer. Requires Zn(2+) as cofactor.

The protein resides in the cytoplasm. The enzyme catalyses tRNA(Ile) + L-isoleucine + ATP = L-isoleucyl-tRNA(Ile) + AMP + diphosphate. Catalyzes the attachment of isoleucine to tRNA(Ile). As IleRS can inadvertently accommodate and process structurally similar amino acids such as valine, to avoid such errors it has two additional distinct tRNA(Ile)-dependent editing activities. One activity is designated as 'pretransfer' editing and involves the hydrolysis of activated Val-AMP. The other activity is designated 'posttransfer' editing and involves deacylation of mischarged Val-tRNA(Ile). The chain is Isoleucine--tRNA ligase from Chlamydia abortus (strain DSM 27085 / S26/3) (Chlamydophila abortus).